The sequence spans 292 residues: Putative phosphatase MPN_381 (292 aa).

The Nucleophile role is filled by D11. D11 is a Mg(2+) binding site. L12 serves as a coordination point for phosphate. D13 contributes to the Mg(2+) binding site. Residues 60–61 (TG) and K217 contribute to the phosphate site. D242 lines the Mg(2+) pocket. N245 contacts phosphate.

This sequence belongs to the HAD-like hydrolase superfamily. Cof family. The cofactor is Mg(2+).

This chain is Putative phosphatase MPN_381, found in Mycoplasma pneumoniae (strain ATCC 29342 / M129 / Subtype 1) (Mycoplasmoides pneumoniae).